The sequence spans 1288 residues: MAREPEEEETVRPAAVVRRCPRCPGWPGAPRPPLWLLCLVACWILGAVADADFSILDEAQVLASQMRRLAAEELGVVTMQRIFNSLVYTEKISNGESEVQQLAKKIREKFNRYLDVVNRNKQVVEASYTAHLTSPLTAIQDCCTIPPSMMEFDGNFNTNVSRTVSCDRLSTTVNSRAFNPGRDLNSVLADNLKSNPGIKWQYFSSEEGIFTVFPAHKFRCKGSYEHRSRPIYVSTVRPQSKHIVVILDHGASVTDTQLQIAKDAAQVILSAIDEHDKISVLTVADAVRTCSLDQCYKTYLSPATSETKRKMSTFVSSVKPSDSPTQHAVGFHRAFQLIRSTSNSTRFQANTDMVIIYLSAGITSKDSSEEDKKATLRVINEENGFLNNSVMILTYALMNDGVTGLKELAFLRDLAEQNSGKYGIPDRTALPVIKGSMMVLNQLSNLETTVGRFYTNLPNRMIDEAVFSLPFSDEMGDGLIMTVSKPCYFGNLLLGIVGVDVNLAYILEDVTYYQDSLASYTFLIDDKGYTLMHPSLTRPYLLSEPPLHTDIIHYENIPKFELVRQNILSLPLGSQIITVPVNSSLSWHINKLRETGKEAYNVSYAWKMVQDTSFILCIVVIQPEIPVKQLKNLNTVPSSKLLYHRLDLLGQPSACLHFKQLATLESPTVMLSAGSFSSPYEHLSQPETKRMVEHYTAYLSDNTRLIANPGLKFSVRNEVMATSHVTDEWMTQMEMSSLNTYIVRRYIATPNGVLRIYPGSLMDKAFDPTRRQWYLHAVANPGLISLTGPYLDVGGAGYVVTISHTIHSSSTQLSSGHTVAVMGIDFTLRYFYKVLMDLLPVCNQDGGNKIRCFIMEDRGYLVAHPTLVDPKGHAPLEQQHITHKEPLVANDILNHPNFVKKNLCNSFSDRTVQRSYKFNTSLVGDLTNLVHGSHCSKYRLTRIPGTNAFVGIVNETCDSLAFCACSMVDRLCLNCHRMEQNECECPCECPLEVNECTGNLTNAENRNPSCEVHQEPVTYTAIDPGLQDALQQCVNSRCNQRMESGDCFGVLDCEWCVVDSDGKTHLDKSYCAPQKECFGGIVGAKSPYVDDMGAIGDEVITLNMIKSAPVGPVAGGIMGCIMVLVLAVYAYRHQIHRRSHQHMSPLAAQEMSVRMSNLENDRDERDDDSHEDRGIISNTRFIAAVMERHVHSPERRRRYWGRSGTESDHGYSTMSPQEDSENPPCNNDPLSAGVDVGNHDDDLDLDTPPQTAALLSHKFHHYRPHHPTLHHSHHLQAAVTVHTVDAEC.

A signal peptide spans 1–49; that stretch reads MAREPEEEETVRPAAVVRRCPRCPGWPGAPRPPLWLLCLVACWILGAVA. Over 50–1109 the chain is Extracellular; that stretch reads DADFSILDEA…ITLNMIKSAP (1060 aa). A glycan (N-linked (GlcNAc...) asparagine) is linked at Asn-159. One can recognise a VWFA domain in the interval 242 to 457; the sequence is HIVVILDHGA…TTVGRFYTNL (216 aa). 2 consecutive Cache domains span residues 467 to 546 and 786 to 867; these read FSLP…SEPP and LTGP…HPTL. The chain crosses the membrane as a helical span at residues 1110 to 1130; sequence VGPVAGGIMGCIMVLVLAVYA. Over 1131 to 1288 the chain is Cytoplasmic; sequence YRHQIHRRSH…VTVHTVDAEC (158 aa). Disordered regions lie at residues 1157-1176 and 1187-1237; these read NLEN…RGII and ERHV…VDVG. Residues 1159–1174 show a composition bias toward basic and acidic residues; the sequence is ENDRDERDDDSHEDRG. The span at 1210 to 1229 shows a compositional bias: polar residues; the sequence is GYSTMSPQEDSENPPCNNDP.

Belongs to the calcium channel subunit alpha-2/delta family.

It is found in the membrane. Its function is as follows. May regulate voltage-dependent calcium channels. The sequence is that of VWFA and cache domain-containing protein 1 (Cachd1) from Mus musculus (Mouse).